A 327-amino-acid chain; its full sequence is Undecaprenyl-phosphate 4-deoxy-4-formamido-L-arabinose transferase (327 aa).

Topologically, residues 1-235 are cytoplasmic; that stretch reads MFDAAPIKKV…TCLTTTPLRL (235 aa). The chain crosses the membrane as a helical span at residues 236 to 256; sequence LSLLGSVIAIGGFSLSVLLIV. At 257-269 the chain is on the periplasmic side; the sequence is LRLALGPQWAAEG. The helical transmembrane segment at 270–290 threads the bilayer; sequence VFMLFAVLFTFIGAQFIGMGL. The Cytoplasmic portion of the chain corresponds to 291 to 327; that stretch reads LGEYIGRIYNDVRARPRYFVQQVIYPESTPFTEESHQ.

The protein belongs to the glycosyltransferase 2 family.

It localises to the cell inner membrane. The catalysed reaction is UDP-4-deoxy-4-formamido-beta-L-arabinose + di-trans,octa-cis-undecaprenyl phosphate = 4-deoxy-4-formamido-alpha-L-arabinopyranosyl di-trans,octa-cis-undecaprenyl phosphate + UDP. It participates in glycolipid biosynthesis; 4-amino-4-deoxy-alpha-L-arabinose undecaprenyl phosphate biosynthesis; 4-amino-4-deoxy-alpha-L-arabinose undecaprenyl phosphate from UDP-4-deoxy-4-formamido-beta-L-arabinose and undecaprenyl phosphate: step 1/2. It functions in the pathway bacterial outer membrane biogenesis; lipopolysaccharide biosynthesis. Its function is as follows. Catalyzes the transfer of 4-deoxy-4-formamido-L-arabinose from UDP to undecaprenyl phosphate. The modified arabinose is attached to lipid A and is required for resistance to polymyxin and cationic antimicrobial peptides. The protein is Undecaprenyl-phosphate 4-deoxy-4-formamido-L-arabinose transferase of Salmonella choleraesuis (strain SC-B67).